A 331-amino-acid chain; its full sequence is MTKIALQQDRPLDAIVLGRAGVDLYAREANTDMADISGFNKFVGGSAANIAVAISKLGGKVGFIGCVADDAFGGYVRGYMTEQGINLDGMMTDNSGSRTSVAFTEMKPNDCTVLIYRNKASDLTLKPEQVDPAYIAQSKMLVVTGTALSESPSREATLIAMEHARRSNTVVVLDVDYRPYSWRTDVDASIYYGIAAGLSDIVIGNREEFDMMETVLAPGNTDDDATADRFLRANTQVVIVKAGELGSKVYCKDGHKFQQGIFRVEVKKPFGSGDSFAGGLIWTLVNGGELEDGVKHGSAAAAINVSGNSCTEAMPTKEVLFDFIETREQDL.

It belongs to the carbohydrate kinase PfkB family.

It catalyses the reaction 5-dehydro-2-deoxy-D-gluconate + ATP = 6-phospho-5-dehydro-2-deoxy-D-gluconate + ADP + H(+). The protein operates within polyol metabolism; myo-inositol degradation into acetyl-CoA; acetyl-CoA from myo-inositol: step 5/7. Functionally, catalyzes the phosphorylation of 5-dehydro-2-deoxy-D-gluconate (2-deoxy-5-keto-D-gluconate or DKG) to 6-phospho-5-dehydro-2-deoxy-D-gluconate (DKGP). In Photobacterium profundum (strain SS9), this protein is 5-dehydro-2-deoxygluconokinase.